The chain runs to 519 residues: Circadian clock oscillator protein KaiC 1 (519 aa).

KaiC domains follow at residues 1–248 and 262–519; these read MNLP…INIF and ARIS…KTAE. ATP contacts are provided by Gly50, Thr51, Gly52, Lys53, Thr54, Leu55, Ser90, Lys225, Leu226, Arg227, Thr229, His231, Thr241, Thr291, Gly292, Thr293, Gly294, Lys295, Thr296, and Leu297. Mg(2+) is bound at residue Thr54. A Mg(2+)-binding site is contributed by Thr296. Glu319 serves as a coordination point for Mg(2+). Residue Trp332 participates in ATP binding. Ser432 is modified (phosphoserine; by autocatalysis). Thr433 bears the Phosphothreonine; by autocatalysis mark. Positions 452, 458, 459, 460, 462, 464, and 466 each coordinate ATP.

It belongs to the KaiC family. In terms of assembly, homohexamer; hexamerization is dependent on ATP-binding. Core component of the KaiABC complex, at least composed of a KaiC homohexamer, a KaiB dimer and two KaiA dimers. Interacts directly with SasA. Multimerizes, probably forming homohexamers, no interaction with KaiC2 or KaiC3 is seen. Interacts with KaiA. In another study interacts with itself, KaiB1, KaiB3 and KaiC3. Interacts with SasA (hik8). Requires Mg(2+) as cofactor. Post-translationally, phosphorylated on serine and threonine residues by autocatalysis. Has a 4 step phosphorylation cycle; the autokinase acts first on Thr-433, then Ser-432. When Ser-432 is modified KaiC switches to an autophosphatase mode, acting first on phospho-Thr-433 then phospho-Ser-432.

It carries out the reaction L-seryl-[protein] + ATP = O-phospho-L-seryl-[protein] + ADP + H(+). The catalysed reaction is L-threonyl-[protein] + ATP = O-phospho-L-threonyl-[protein] + ADP + H(+). It catalyses the reaction ATP + H2O = ADP + phosphate + H(+). The interaction with KaiA enhances its phosphorylation status, while the interaction with KaiB decreases it. Its function is as follows. Component of the oscillator and circadian clock in this organism, enhances fitness in a rhythmic environment. Autophosphorylates in the presence of KaiA, no activity is seen in its absence. Functionally, central component of the KaiABC oscillator complex, which constitutes the main circadian regulator in cyanobacteria. Complex composition changes during the circadian cycle to control KaiC phosphorylation. KaiA stimulates KaiC autophosphorylation, while KaiB sequesters KaiA, leading to KaiC autodephosphorylation. Clock output pathways impact the RpaA transcriptional regulator. KaiC enhances the autophosphorylation activity of SasA, which then transfers its phosphate group to RpaA to activate it. KaiB and KaiC together enhance the phospho-RpaA dephosphatase activity of CikA. Has a weak, temperature-independent ATPase activity; ATPase activity defines the circadian period. The phosphorylation state of KaiC modulates its ATPase activity and effects KaiB binding. In Synechocystis sp. (strain ATCC 27184 / PCC 6803 / Kazusa), this protein is Circadian clock oscillator protein KaiC 1.